We begin with the raw amino-acid sequence, 193 residues long: MRLCDRDIEAWLDSGKLGIDPRPPVERINGATVDVRLGNKFRVFLGHTAGFIDLSGPKDEVSAALERVMSDEIILPEGEAFFLHPGELALAVTLESVTIPDDLVGWLDGRSSLARLGLMVHVTAHRIDPGWQGRIVLEFYNSGKLPLALRPGMLIGALSFEPLSGPAARPYNSRQDAKYRGQQGAVASRIDKD.

DCTP is bound by residues 110-115 (RSSLAR), aspartate 128, 136-138 (VLE), tyrosine 171, lysine 178, and glutamine 182. Glutamate 138 acts as the Proton donor/acceptor in catalysis. Positions 170–193 (PYNSRQDAKYRGQQGAVASRIDKD) are disordered.

This sequence belongs to the dCTP deaminase family. As to quaternary structure, homotrimer.

It catalyses the reaction dCTP + H2O + H(+) = dUTP + NH4(+). The protein operates within pyrimidine metabolism; dUMP biosynthesis; dUMP from dCTP (dUTP route): step 1/2. Its function is as follows. Catalyzes the deamination of dCTP to dUTP. The protein is dCTP deaminase of Yersinia enterocolitica serotype O:8 / biotype 1B (strain NCTC 13174 / 8081).